The primary structure comprises 375 residues: Alcohol dehydrogenase 3, mitochondrial (375 aa).

Residues 1–24 constitute a mitochondrion transit peptide; it reads MLRTSTLFTRRVQPSLFSRNILRL. Residue Cys71 participates in Zn(2+) binding. His72, Thr73, and His76 together coordinate NAD(+). Positions 94, 95, 125, 128, 131, 139, and 181 each coordinate Zn(2+). 10 residues coordinate NAD(+): Gly208, Gly209, Leu210, Asp229, Lys234, Phe249, Val296, Ser321, Val323, and Arg368.

This sequence belongs to the zinc-containing alcohol dehydrogenase family. As to quaternary structure, homotetramer. Zn(2+) serves as cofactor.

The protein localises to the mitochondrion matrix. Its subcellular location is the mitochondrion inner membrane. The catalysed reaction is a primary alcohol + NAD(+) = an aldehyde + NADH + H(+). The enzyme catalyses a secondary alcohol + NAD(+) = a ketone + NADH + H(+). It carries out the reaction ethanol + NAD(+) = acetaldehyde + NADH + H(+). It catalyses the reaction butan-1-ol + NAD(+) = butanal + NADH + H(+). The catalysed reaction is hexan-1-ol + NAD(+) = hexanal + NADH + H(+). Its function is as follows. Mitochondrial isozyme that reduces acetaldehyde to ethanol during the fermentation of glucose. Involved in the shuttling of mitochondrial reducing equivalents to the cytosol, where the redox balance is restored by NADH dehydrogenases on the external side of the mitochondrial inner membrane. Shows a high affinity for alcohols with a double bond conjugated to the alcohol group. The polypeptide is Alcohol dehydrogenase 3, mitochondrial (ADH3) (Saccharomyces cerevisiae (strain ATCC 204508 / S288c) (Baker's yeast)).